The primary structure comprises 228 residues: Cytochrome c oxidase subunit 2 (228 aa).

Over 1–26 the chain is Mitochondrial intermembrane; it reads MATWANLGLQDSSSPLMEQLNFFHDH. The chain crosses the membrane as a helical span at residues 27–47; the sequence is TLLILTMITILVGYIMGMLMF. Over 48-60 the chain is Mitochondrial matrix; that stretch reads NQFTNRYLLHGQT. A helical membrane pass occupies residues 61-81; sequence IEIIWTVLPAIILMFIALPSL. Over 82–228 the chain is Mitochondrial intermembrane; the sequence is RLLYLMDEIN…FIKWITNMTN (147 aa). Residues His161, Cys196, Glu198, Cys200, His204, and Met207 each coordinate Cu cation. Mg(2+) is bound at residue Glu198.

The protein belongs to the cytochrome c oxidase subunit 2 family. As to quaternary structure, component of the cytochrome c oxidase (complex IV, CIV), a multisubunit enzyme composed of a catalytic core of 3 subunits and several supernumerary subunits. The complex exists as a monomer or a dimer and forms supercomplexes (SCs) in the inner mitochondrial membrane with ubiquinol-cytochrome c oxidoreductase (cytochrome b-c1 complex, complex III, CIII). Cu cation serves as cofactor.

It localises to the mitochondrion inner membrane. The catalysed reaction is 4 Fe(II)-[cytochrome c] + O2 + 8 H(+)(in) = 4 Fe(III)-[cytochrome c] + 2 H2O + 4 H(+)(out). Component of the cytochrome c oxidase, the last enzyme in the mitochondrial electron transport chain which drives oxidative phosphorylation. The respiratory chain contains 3 multisubunit complexes succinate dehydrogenase (complex II, CII), ubiquinol-cytochrome c oxidoreductase (cytochrome b-c1 complex, complex III, CIII) and cytochrome c oxidase (complex IV, CIV), that cooperate to transfer electrons derived from NADH and succinate to molecular oxygen, creating an electrochemical gradient over the inner membrane that drives transmembrane transport and the ATP synthase. Cytochrome c oxidase is the component of the respiratory chain that catalyzes the reduction of oxygen to water. Electrons originating from reduced cytochrome c in the intermembrane space (IMS) are transferred via the dinuclear copper A center (CU(A)) of subunit 2 and heme A of subunit 1 to the active site in subunit 1, a binuclear center (BNC) formed by heme A3 and copper B (CU(B)). The BNC reduces molecular oxygen to 2 water molecules using 4 electrons from cytochrome c in the IMS and 4 protons from the mitochondrial matrix. This chain is Cytochrome c oxidase subunit 2 (COXII), found in Anopheles quadrimaculatus (Common malaria mosquito).